The following is a 339-amino-acid chain: Inositol 2-dehydrogenase (339 aa).

This sequence belongs to the Gfo/Idh/MocA family. In terms of assembly, homotetramer.

The enzyme catalyses myo-inositol + NAD(+) = scyllo-inosose + NADH + H(+). Involved in the oxidation of myo-inositol (MI) to 2-keto-myo-inositol (2KMI or 2-inosose). This is Inositol 2-dehydrogenase from Leifsonia xyli subsp. xyli (strain CTCB07).